A 145-amino-acid polypeptide reads, in one-letter code: Ribonuclease H (145 aa).

The 142-residue stretch at 1–142 (MDTPVYLYTD…ADDLANRGAA (142 aa)) folds into the RNase H type-1 domain. D10, E48, D70, and D134 together coordinate Mg(2+).

It belongs to the RNase H family. In terms of assembly, monomer. It depends on Mg(2+) as a cofactor.

Its subcellular location is the cytoplasm. The enzyme catalyses Endonucleolytic cleavage to 5'-phosphomonoester.. Endonuclease that specifically degrades the RNA of RNA-DNA hybrids. The polypeptide is Ribonuclease H (Neisseria meningitidis serogroup C / serotype 2a (strain ATCC 700532 / DSM 15464 / FAM18)).